The primary structure comprises 325 residues: Protease HtpX homolog (325 aa).

Residues 20 to 40 (IGYLLGGGGGMMIALVIAVAM) traverse the membrane as a helical segment. A Zn(2+)-binding site is contributed by histidine 130. Glutamate 131 is an active-site residue. Histidine 134 contacts Zn(2+). Transmembrane regions (helical) follow at residues 145 to 165 (IVATLAGAISMLGNFAFFLGG) and 173 to 193 (VMGVVGTLLAMIVAPFAAMIV). Glutamate 202 contacts Zn(2+). Residues 288-325 (AMTARAAAPSQNSGPWGQRSDNAGGNSNGGSRYRGPWS) are disordered. Low complexity predominate over residues 306–325 (RSDNAGGNSNGGSRYRGPWS).

The protein belongs to the peptidase M48B family. It depends on Zn(2+) as a cofactor.

It localises to the cell inner membrane. The polypeptide is Protease HtpX homolog (Brucella suis (strain ATCC 23445 / NCTC 10510)).